The chain runs to 216 residues: Regulatory protein RecX (216 aa).

This sequence belongs to the RecX family.

The protein resides in the cytoplasm. In terms of biological role, modulates RecA activity. The chain is Regulatory protein RecX from Clostridium tetani (strain Massachusetts / E88).